The sequence spans 226 residues: MDEAPVTRSTLNVNSQQKSKAKNKIKNTLNSNELSSIEQRKKYQKHLKKHKNTAEDISGKGNCSPPWRLLSSVLGAMCLLLMAVAMVMTTFTTKSSSERSSSTIQQEGLHHPCPENWVWFRCSCYFFSKEELIWRDSQRACLSLNSSLIRMNKEEMNFFSLKSFFWVGVYYNETRRQWLWEDHSVLPSGLFSKLEANMKNFCASYKSKEAYMEENCANKLTYICKK.

Residues 1-28 are disordered; that stretch reads MDEAPVTRSTLNVNSQQKSKAKNKIKNT. The Cytoplasmic segment spans residues 1 to 68; it reads MDEAPVTRST…GKGNCSPPWR (68 aa). Positions 7–18 are enriched in polar residues; it reads TRSTLNVNSQQK. The helical; Signal-anchor for type II membrane protein transmembrane segment at 69–89 threads the bilayer; it reads LLSSVLGAMCLLLMAVAMVMT. The Extracellular segment spans residues 90–226; that stretch reads TFTTKSSSER…ANKLTYICKK (137 aa). Intrachain disulfides connect C113–C124, C141–C224, and C202–C216. The C-type lectin domain maps to 120–225; sequence FRCSCYFFSK…CANKLTYICK (106 aa). N145 carries N-linked (GlcNAc...) asparagine glycosylation.

Heterodimer; with KLRI1 or KLRI2. Expressed in natural killer (NK) cells (at protein level). Also detected in natural killer T (NKT) cells (at protein level). Has little or no expression in T cells (at protein level).

It is found in the cell membrane. Functionally, lectin-like receptor for natural killer (NK) cells. Can either inhibit or activate NK cell cytotoxic activity, depending on its binding partner. Heterodimer formation with KLRI1 mediates NK cell inhibition whereas heterodimer formation with KLRI2 mediates NK cell activation. Plays a role in allogeneic recognition by the immune system. This chain is Killer cell lectin-like receptor subfamily E member 1, found in Mus musculus (Mouse).